The sequence spans 453 residues: UDP-N-acetylmuramoylalanine--D-glutamate ligase (453 aa).

Residue Gly-119–Thr-125 coordinates ATP.

Belongs to the MurCDEF family.

It localises to the cytoplasm. The catalysed reaction is UDP-N-acetyl-alpha-D-muramoyl-L-alanine + D-glutamate + ATP = UDP-N-acetyl-alpha-D-muramoyl-L-alanyl-D-glutamate + ADP + phosphate + H(+). It participates in cell wall biogenesis; peptidoglycan biosynthesis. Functionally, cell wall formation. Catalyzes the addition of glutamate to the nucleotide precursor UDP-N-acetylmuramoyl-L-alanine (UMA). The chain is UDP-N-acetylmuramoylalanine--D-glutamate ligase from Syntrophus aciditrophicus (strain SB).